A 71-amino-acid polypeptide reads, in one-letter code: Beta-defensin 25 (71 aa).

An N-terminal signal peptide occupies residues 1-22 (MAKWILLIVALLVLSHVPPGST). 3 cysteine pairs are disulfide-bonded: cysteine 27–cysteine 54, cysteine 34–cysteine 48, and cysteine 38–cysteine 55.

It belongs to the beta-defensin family.

Its subcellular location is the secreted. Its function is as follows. Has antibacterial activity. In Mus musculus (Mouse), this protein is Beta-defensin 25 (Defb25).